The chain runs to 224 residues: 7-cyano-7-deazaguanine synthase (224 aa).

Leu-12–Thr-22 is a binding site for ATP. Zn(2+)-binding residues include Cys-193, Cys-201, Cys-204, and Cys-207.

The protein belongs to the QueC family. The cofactor is Zn(2+).

The catalysed reaction is 7-carboxy-7-deazaguanine + NH4(+) + ATP = 7-cyano-7-deazaguanine + ADP + phosphate + H2O + H(+). It functions in the pathway purine metabolism; 7-cyano-7-deazaguanine biosynthesis. Functionally, catalyzes the ATP-dependent conversion of 7-carboxy-7-deazaguanine (CDG) to 7-cyano-7-deazaguanine (preQ(0)). This Prochlorococcus marinus (strain AS9601) protein is 7-cyano-7-deazaguanine synthase.